A 104-amino-acid polypeptide reads, in one-letter code: Replication factor A protein 3 (104 aa).

It belongs to the replication factor A protein 3 family. In terms of assembly, component of the heterotrimeric canonical replication protein A complex (RPA).

The protein localises to the nucleus. Its function is as follows. As part of the replication protein A (RPA/RP-A), a single-stranded DNA-binding heterotrimeric complex, may play an essential role in DNA replication, recombination and repair. Binds and stabilizes single-stranded DNA intermediates, preventing complementary DNA reannealing and recruiting different proteins involved in DNA metabolism. The polypeptide is Replication factor A protein 3 (ssb3) (Schizosaccharomyces pombe (strain 972 / ATCC 24843) (Fission yeast)).